We begin with the raw amino-acid sequence, 514 residues long: Nucleus accumbens-associated protein 1 (514 aa).

The BTB domain maps to 30–94 (CDVSVVVKGH…CYTGRLSMNM (65 aa)). Lys167 participates in a covalent cross-link: Glycyl lysine isopeptide (Lys-Gly) (interchain with G-Cter in SUMO1); alternate. Lys167 participates in a covalent cross-link: Glycyl lysine isopeptide (Lys-Gly) (interchain with G-Cter in SUMO2); alternate. Lys182 is covalently cross-linked (Glycyl lysine isopeptide (Lys-Gly) (interchain with G-Cter in SUMO2)). Disordered regions lie at residues 183 to 218 (RLWD…NRMP) and 241 to 279 (GPSM…EEGT). A Phosphoserine modification is found at Ser187. Over residues 242-251 (PSMSERTSPG) the composition is skewed to polar residues. Residue Ser245 is modified to Phosphoserine; by PKC. The span at 252–264 (TSSAYTSDSPSSY) shows a compositional bias: low complexity. The segment covering 267-279 (EEDEEEDAGEEGT) has biased composition (acidic residues). Residues Lys304, Lys438, Lys466, and Lys485 each participate in a glycyl lysine isopeptide (Lys-Gly) (interchain with G-Cter in SUMO2) cross-link. Positions 360-457 (GTNVYITRAQ…DMCTNARRVV (98 aa)) constitute a BEN domain. Phosphoserine occurs at positions 492 and 496.

As to quaternary structure, homooligomer; mediated by the BTB domain. Both isoforms interact with HDAC3 and HDAC4. Interacts (via BTB domain) with CUL3, PSMD7 and RCOR1. Post-translationally, phosphorylated by protein kinase C (PKC). In terms of tissue distribution, highly expressed in the hippocampus, brain cortex, cerebellum and brainstem. Expressed in the nucleus accumbens, olfactory tubercle, the striatum, frontal and parietal cortex and ventral pallidum. Weakly expressed in the heart, liver, kidney, spleen, testis, and skeletal muscle. Isoform 2 is expressed in the brain and liver, less abundantly expressed in the brain than isoform 1.

The protein resides in the nucleus. The protein localises to the cytoplasm. In terms of biological role, functions as a transcriptional repressor. Isoform 1 is a stronger transcriptional repressor than isoform 2. Seems to function as a transcriptional corepressor in neuronal cells through recruitment of HDAC3 and HDAC4. Contributes to tumor progression, and tumor cell proliferation and survival. This may be mediated at least in part through repressing transcriptional activity of GADD45GIP1. Required for recruiting the proteasome from the nucleus to the cytoplasm and dendritic spines. The sequence is that of Nucleus accumbens-associated protein 1 (Nacc1) from Rattus norvegicus (Rat).